Here is a 607-residue protein sequence, read N- to C-terminus: UvrABC system protein C (607 aa).

The 79-residue stretch at 16 to 94 (GRPGVYRMFD…IKEWRPPYNI (79 aa)) folds into the GIY-YIG domain. Positions 203 to 238 (QQLGNELNAEMEKAAMALDFEKAAELRDQIALLRRV) constitute a UVR domain.

The protein belongs to the UvrC family. In terms of assembly, interacts with UvrB in an incision complex.

It localises to the cytoplasm. The UvrABC repair system catalyzes the recognition and processing of DNA lesions. UvrC both incises the 5' and 3' sides of the lesion. The N-terminal half is responsible for the 3' incision and the C-terminal half is responsible for the 5' incision. This is UvrABC system protein C from Pseudomonas putida (strain ATCC 47054 / DSM 6125 / CFBP 8728 / NCIMB 11950 / KT2440).